Consider the following 232-residue polypeptide: uncharacterized protein (232 aa).

The next 7 helical transmembrane spans lie at 17 to 37, 54 to 74, 84 to 104, 107 to 127, 138 to 158, 161 to 181, and 203 to 223; these read FLAK…VFAY, MSFM…SGAL, ALFL…FMIY, GSIV…SVYG, GSYL…NMFF, SGLN…LTAY, and MAVV…LYLL.

It belongs to the BI1 family.

Its subcellular location is the cell membrane. This is an uncharacterized protein from Borreliella burgdorferi (strain ATCC 35210 / DSM 4680 / CIP 102532 / B31) (Borrelia burgdorferi).